We begin with the raw amino-acid sequence, 298 residues long: Inosose dehydratase (298 aa).

The protein belongs to the IolE/MocC family. Glutathione is required as a cofactor. Requires Co(2+) as cofactor. Mn(2+) serves as cofactor.

The enzyme catalyses scyllo-inosose = 3D-3,5/4-trihydroxycyclohexane-1,2-dione + H2O. Catalyzes the dehydration of inosose (2-keto-myo-inositol, 2KMI or 2,4,6/3,5-pentahydroxycyclohexanone) to 3D-(3,5/4)-trihydroxycyclohexane-1,2-dione (D-2,3-diketo-4-deoxy-epi-inositol). This chain is Inosose dehydratase, found in Serratia proteamaculans (strain 568).